The sequence spans 164 residues: UPF0262 protein Nham_0287 (164 aa).

This sequence belongs to the UPF0262 family.

The chain is UPF0262 protein Nham_0287 from Nitrobacter hamburgensis (strain DSM 10229 / NCIMB 13809 / X14).